The sequence spans 417 residues: GTP-binding protein YPT11 (417 aa).

The disordered stretch occupies residues 1 to 34; the sequence is MSQRKRYSLNVVTSPSIPSPTPSAPIRTNESNWE. Residues 97-104, 228-232, and 292-295 each bind GTP; these read GDANVGKT, DTAGQ, and NKID. 2 S-geranylgeranyl cysteine lipidation sites follow: Cys415 and Cys416.

The protein belongs to the small GTPase superfamily. Rab family. As to quaternary structure, interacts with MYO2 (via C-terminal tail domain). Interacts with YIF1, YIP3, YIP4 and YIP5.

It is found in the endoplasmic reticulum membrane. The protein localises to the bud tip. The protein resides in the bud neck. Involved in the positive control of both endoplasmic reticulum (ER) and mitochondrion inheritance during cell divison. Required for the MYO2-dependent retention of newly inherited mitochondria at the bud tip in developing daughter cells. In Saccharomyces cerevisiae (strain YJM789) (Baker's yeast), this protein is GTP-binding protein YPT11 (YPT11).